A 357-amino-acid chain; its full sequence is Probable xyloglucan endotransglucosylase/hydrolase protein 29 (357 aa).

The N-terminal stretch at M1–G31 is a signal peptide. The GH16 domain occupies L32–F232. E117 (nucleophile) is an active-site residue. Catalysis depends on E121, which acts as the Proton donor. Residues E121 and Q134–N136 contribute to the xyloglucan site. N140 carries an N-linked (GlcNAc...) asparagine glycan. Xyloglucan is bound by residues N144–E148, S211–W212, and G216. Residues N241 and N262 are each glycosylated (N-linked (GlcNAc...) asparagine). The cysteines at positions 299 and 312 are disulfide-linked. R304 is a binding site for xyloglucan. Residues G326–L357 are disordered. The segment covering P335–R348 has biased composition (basic residues). N347 is a glycosylation site (N-linked (GlcNAc...) asparagine).

This sequence belongs to the glycosyl hydrolase 16 family. XTH group 3 subfamily. Contains at least one intrachain disulfide bond essential for its enzymatic activity.

The protein localises to the secreted. It is found in the cell wall. The protein resides in the extracellular space. Its subcellular location is the apoplast. The enzyme catalyses breaks a beta-(1-&gt;4) bond in the backbone of a xyloglucan and transfers the xyloglucanyl segment on to O-4 of the non-reducing terminal glucose residue of an acceptor, which can be a xyloglucan or an oligosaccharide of xyloglucan.. Functionally, catalyzes xyloglucan endohydrolysis (XEH) and/or endotransglycosylation (XET). Cleaves and religates xyloglucan polymers, an essential constituent of the primary cell wall, and thereby participates in cell wall construction of growing tissues. This chain is Probable xyloglucan endotransglucosylase/hydrolase protein 29 (XTH29), found in Arabidopsis thaliana (Mouse-ear cress).